We begin with the raw amino-acid sequence, 1420 residues long: DNA-directed RNA polymerase subunit beta' (1420 aa).

Residues Cys-70, Cys-72, Cys-85, and Cys-88 each contribute to the Zn(2+) site. Positions 464, 466, and 468 each coordinate Mg(2+). Zn(2+) is bound by residues Cys-823, Cys-897, Cys-904, and Cys-907.

It belongs to the RNA polymerase beta' chain family. In terms of assembly, the RNAP catalytic core consists of 2 alpha, 1 beta, 1 beta' and 1 omega subunit. When a sigma factor is associated with the core the holoenzyme is formed, which can initiate transcription. The cofactor is Mg(2+). Zn(2+) is required as a cofactor.

It carries out the reaction RNA(n) + a ribonucleoside 5'-triphosphate = RNA(n+1) + diphosphate. DNA-dependent RNA polymerase catalyzes the transcription of DNA into RNA using the four ribonucleoside triphosphates as substrates. The protein is DNA-directed RNA polymerase subunit beta' of Polynucleobacter asymbioticus (strain DSM 18221 / CIP 109841 / QLW-P1DMWA-1) (Polynucleobacter necessarius subsp. asymbioticus).